Here is a 47-residue protein sequence, read N- to C-terminus: Sperm protamine P1 (47 aa).

It belongs to the protamine P1 family. As to expression, testis.

It is found in the nucleus. Its subcellular location is the chromosome. Protamines substitute for histones in the chromatin of sperm during the haploid phase of spermatogenesis. They compact sperm DNA into a highly condensed, stable and inactive complex. In Orcinus orca (Killer whale), this protein is Sperm protamine P1 (PRM1).